The primary structure comprises 754 residues: Lysophospholipase 3 (754 aa).

Positions 1-19 (MKVNLKLIIGSILISQAQA) are cleaved as a signal peptide. Low complexity-rich tracts occupy residues 25 to 40 (SSGS…SETG) and 50 to 88 (LFGS…SSNS). The segment at 25–88 (SSGSSSSSDS…DSSLFSSSNS (64 aa)) is disordered. Residues Asn112, Asn156, Asn174, Asn317, Asn325, Asn354, Asn391, Asn423, Asn470, Asn510, Asn515, Asn560, Asn577, Asn597, Asn625, and Asn631 are each glycosylated (N-linked (GlcNAc...) asparagine). One can recognise a PLA2c domain in the interval 114 to 670 (TCPSKKTFIR…QEYCWTGGFK (557 aa)). Residues 687–721 (KTHTSGGTSSTTQQTSTTTGSSANGGSSSTGSSSS) show a composition bias toward low complexity. The segment at 687-727 (KTHTSGGTSSTTQQTSTTTGSSANGGSSSTGSSSSSKKKNG) is disordered.

It belongs to the lysophospholipase family.

It is found in the secreted. The catalysed reaction is a 1-acyl-sn-glycero-3-phosphocholine + H2O = sn-glycerol 3-phosphocholine + a fatty acid + H(+). Catalyzes the release of fatty acids from lysophospholipids. Phospholipase B may well contribute to pathogenicity by abetting the fungus in damaging and traversing host cell membranes, processes which likely increase the rapidity of disseminated infection. This Candida albicans (Yeast) protein is Lysophospholipase 3 (PLB3).